Consider the following 273-residue polypeptide: Gamma-glutamyl cyclotransferase aclK (273 aa).

Belongs to the class-I pyridoxal-phosphate-dependent aminotransferase family.

The enzyme catalyses an alpha-(gamma-L-glutamyl)-L-amino acid = 5-oxo-L-proline + an L-alpha-amino acid. The protein operates within mycotoxin biosynthesis. Functionally, gamma-glutamyl cyclotransferase; part of the gene cluster that mediates the biosynthesis of aspirochlorine (or antibiotic A30641), an unusual halogenated spiro compound with distinctive antifungal properties due to selective inhibition of protein biosynthesis, and which is also active against bacteria, viruses, and murine tumor cells. The non-ribosomal peptide synthetase (NRPS) aclP is responsible the formation of the diketopiperazine (DKP) core from the condensation of 2 phenylalanine residues. One Phe residue is tailored into chlorotyrosine by hydroxylation and chlorination, whereas the second Phe undergoes an unprecedented C-C bond cleavage to be converted into glycine. After formation of the DKP, sulfur is incorporated into the DKP by conjugation with glutathione by aclG, followed by its stepwise degradation to the thiol by aclI, aclJ and aclK, and the dithiol oxidation by aclT. In addition, oxygenases (aclB, aclC, aclL and aclO) and O-methyltransferases (aclM and aclU) act as tailoring enzymes to produce the intermediate dechloroaspirochlorine. Ultimately, chlorination of dechloroaspirochlorine by the halogenase aclH is the last step in the aspirochlorine pathway. The sequence is that of Gamma-glutamyl cyclotransferase aclK from Aspergillus oryzae (strain ATCC 42149 / RIB 40) (Yellow koji mold).